The following is a 334-amino-acid chain: Holliday junction branch migration complex subunit RuvB (334 aa).

Residues 4 to 184 are large ATPase domain (RuvB-L); it reads ADRLIQPQLQ…FGIPLRLEFY (181 aa). ATP is bound by residues Arg24, Gly65, Lys68, Thr69, Thr70, 131–133, Arg174, Tyr184, and Arg221; that span reads EDY. Thr69 lines the Mg(2+) pocket. The small ATPAse domain (RuvB-S) stretch occupies residues 185–255; the sequence is NVKDLSTIVS…VAEHALDLLD (71 aa). The tract at residues 258 to 334 is head domain (RuvB-H); that stretch reads GEGFDYMDRK…YLHFGMIKPE (77 aa). Residues Arg294, Arg313, and Arg318 each contribute to the DNA site.

The protein belongs to the RuvB family. Homohexamer. Forms an RuvA(8)-RuvB(12)-Holliday junction (HJ) complex. HJ DNA is sandwiched between 2 RuvA tetramers; dsDNA enters through RuvA and exits via RuvB. An RuvB hexamer assembles on each DNA strand where it exits the tetramer. Each RuvB hexamer is contacted by two RuvA subunits (via domain III) on 2 adjacent RuvB subunits; this complex drives branch migration. In the full resolvosome a probable DNA-RuvA(4)-RuvB(12)-RuvC(2) complex forms which resolves the HJ.

It localises to the cytoplasm. The catalysed reaction is ATP + H2O = ADP + phosphate + H(+). Its function is as follows. The RuvA-RuvB-RuvC complex processes Holliday junction (HJ) DNA during genetic recombination and DNA repair, while the RuvA-RuvB complex plays an important role in the rescue of blocked DNA replication forks via replication fork reversal (RFR). RuvA specifically binds to HJ cruciform DNA, conferring on it an open structure. The RuvB hexamer acts as an ATP-dependent pump, pulling dsDNA into and through the RuvAB complex. RuvB forms 2 homohexamers on either side of HJ DNA bound by 1 or 2 RuvA tetramers; 4 subunits per hexamer contact DNA at a time. Coordinated motions by a converter formed by DNA-disengaged RuvB subunits stimulates ATP hydrolysis and nucleotide exchange. Immobilization of the converter enables RuvB to convert the ATP-contained energy into a lever motion, pulling 2 nucleotides of DNA out of the RuvA tetramer per ATP hydrolyzed, thus driving DNA branch migration. The RuvB motors rotate together with the DNA substrate, which together with the progressing nucleotide cycle form the mechanistic basis for DNA recombination by continuous HJ branch migration. Branch migration allows RuvC to scan DNA until it finds its consensus sequence, where it cleaves and resolves cruciform DNA. The protein is Holliday junction branch migration complex subunit RuvB of Shewanella sp. (strain MR-7).